Reading from the N-terminus, the 155-residue chain is MFTIDFSDHTGLVETSWLDQIDQLLTFAKKKENIHNDAELSVTFVDKDEIQNINKVYRDKDKVTDVISFALEEDEPEIDFNDFDIPRVLGDIIICTDVAKEQSESYGHSFERELGFLALHGFLHLLGYDHMNDNDEKEMFGRQDAILNEFGLTRN.

Histidine 120, histidine 124, and histidine 130 together coordinate Zn(2+).

The protein belongs to the endoribonuclease YbeY family. Zn(2+) serves as cofactor.

It is found in the cytoplasm. Its function is as follows. Single strand-specific metallo-endoribonuclease involved in late-stage 70S ribosome quality control and in maturation of the 3' terminus of the 16S rRNA. This is Endoribonuclease YbeY from Staphylococcus epidermidis (strain ATCC 35984 / DSM 28319 / BCRC 17069 / CCUG 31568 / BM 3577 / RP62A).